A 664-amino-acid chain; its full sequence is Intraflagellar transport protein 70B (664 aa).

7 TPR repeats span residues 11-44 (DGEFTAVVYRLIRDSRYSEAVQLLSAELQRSSRS), 45-78 (RAGLSLLAYCYYRLQEFELAAECYEQLSQMHPEL), 153-186 (YDGQINLGCLLYKEGHYEAACSKFLAALQASGYQ), 188-220 (DLSYNLALAYYSSRQYAPALKHIADIIERGIRQ), 385-418 (LTEQLRKLTIQVQDSRHSRDDESAKKAVNEYDET), 423-456 (IPVLMAQAKIYWNFENYPMVEKIFRKSVEFCNDH), and 458-491 (VWKLNVAHVLFMQENKYKEAIGFYEPIVKKNYDN). Residues 507–534 (YIMTSQNEEAEELMRKIEKEEEQLSYGD) are a coiled coil. The stretch at 543 to 576 (CIVNLVIGTLYCAKGNYDFGISRVIKSLEPYHKK) is one TPR 8 repeat.

This sequence belongs to the TTC30/dfy-1/fleer family. As to quaternary structure, interacts with the IFT B complex components IFT27, IFT46, IFT74, IFT52, IFT57, IFT80, IFT81 and IFT88. Interacts with KIF17.

The protein localises to the cell projection. The protein resides in the cilium. Required for polyglutamylation of axonemal tubulin. Plays a role in anterograde intraflagellar transport (IFT), the process by which cilia precursors are transported from the base of the cilium to the site of their incorporation at the tip. In Mus musculus (Mouse), this protein is Intraflagellar transport protein 70B (Ift70b).